The chain runs to 865 residues: Xylosyltransferase 2 (865 aa).

At 1 to 15 the chain is on the cytoplasmic side; it reads MVASARVQKLVRRYK. A helical; Signal-anchor for type II membrane protein transmembrane segment spans residues 16-36; that stretch reads LAIATALAILLLQGLVVWSFS. The Lumenal portion of the chain corresponds to 37-865; the sequence is GLEEDEAGEK…GPVKADGRLR (829 aa). Residues 41 to 157 form a disordered region; the sequence is DEAGEKGRQR…EGAPQPTDNG (117 aa). Positions 53 to 65 are enriched in basic and acidic residues; that stretch reads RPLDPGEGSKDTD. The span at 73–82 shows a compositional bias: basic residues; that stretch reads STGRRHGRWR. A glycan (N-linked (GlcNAc...) asparagine) is linked at asparagine 122. Positions 125 to 137 are enriched in low complexity; the sequence is GAAAGEALVGAAG. Intrachain disulfides connect cysteine 162–cysteine 190, cysteine 206–cysteine 448, cysteine 467–cysteine 480, and cysteine 469–cysteine 478. Residues valine 239, aspartate 267, and 296–298 contribute to the UDP-alpha-D-xylose site; that span reads TIW. N-linked (GlcNAc...) asparagine glycosylation occurs at asparagine 327. A UDP-alpha-D-xylose-binding site is contributed by 400–401; it reads DW. UDP-alpha-D-xylose-binding positions include serine 481 and 504-505; that span reads RK. 2 cysteine pairs are disulfide-bonded: cysteine 581–cysteine 833 and cysteine 826–cysteine 839. N-linked (GlcNAc...) asparagine glycosylation is present at asparagine 683. The interval 846-865 is disordered; it reads SLSPDPKSELGPVKADGRLR.

The protein belongs to the glycosyltransferase 14 family. XylT subfamily. Monomer. It depends on Mg(2+) as a cofactor. Requires Mn(2+) as cofactor. Post-translationally, contains disulfide bonds. As to expression, widely expressed. Expressed at higher level in kidney and pancreas.

The protein localises to the golgi apparatus membrane. The protein resides in the secreted. The enzyme catalyses UDP-alpha-D-xylose + L-seryl-[protein] = 3-O-(beta-D-xylosyl)-L-seryl-[protein] + UDP + H(+). The protein operates within glycan metabolism; chondroitin sulfate biosynthesis. It participates in glycan metabolism; heparan sulfate biosynthesis. In terms of biological role, catalyzes the first step in the biosynthesis of chondroitin sulfate, heparan sulfate and dermatan sulfate proteoglycans, such as DCN. Transfers D-xylose from UDP-D-xylose to specific serine residues of the core protein. The chain is Xylosyltransferase 2 (XYLT2) from Homo sapiens (Human).